Reading from the N-terminus, the 130-residue chain is Small ribosomal subunit protein uS11 (130 aa).

It belongs to the universal ribosomal protein uS11 family. Part of the 30S ribosomal subunit. Interacts with proteins S7 and S18. Binds to IF-3.

Located on the platform of the 30S subunit, it bridges several disparate RNA helices of the 16S rRNA. Forms part of the Shine-Dalgarno cleft in the 70S ribosome. The polypeptide is Small ribosomal subunit protein uS11 (Shewanella frigidimarina (strain NCIMB 400)).